A 335-amino-acid polypeptide reads, in one-letter code: NmrA-like family domain-containing oxidoreductase ptmS (335 aa).

NADP(+) contacts are provided by residues G12–Q17, R39–S43, D60–G61, I81–F88, K139, and F163–N166. The tract at residues G161–S206 is interaction with ASS1.

The protein belongs to the NmrA-type oxidoreductase family.

It participates in secondary metabolite biosynthesis. Its function is as follows. NmrA-like family domain-containing oxidoreductase; part of the gene cluster that mediates the biosynthesis of the indole diterpenes penitrems. The geranylgeranyl diphosphate (GGPP) synthase ptmG catalyzes the first step in penitrem biosynthesis via conversion of farnesyl pyrophosphate and isopentyl pyrophosphate into geranylgeranyl pyrophosphate (GGPP). Condensation of indole-3-glycerol phosphate with GGPP by the prenyl transferase ptmC then forms 3-geranylgeranylindole (3-GGI). Epoxidation by the FAD-dependent monooxygenase ptmM leads to a epoxidized-GGI that is substrate of the terpene cyclase ptmB for cyclization to yield paspaline. Paspaline is subsequently converted to 13-desoxypaxilline by the cytochrome P450 monooxygenase ptmP, the latter being then converted to paxilline by the cytochrome P450 monooxygenase ptmQ. Paxilline is converted to beta-paxitriol via C-10 ketoreduction by the short-chain dehydrogenase ptmH which can be monoprenylated at the C-20 by the indole diterpene prenyltransferase ptmD. A two-step elimination (acetylation and elimination) process performed by the O-acetyltransferase ptmV and ptmI leads to the production of the prenylated form of penijanthine. The FAD-linked oxidoreductase ptmO then converts the prenylated form of penijanthine into PC-M5 which is in turn transformed into PC-M4 by the aromatic dimethylallyltransferase ptmE. Five sequential oxidative transformations performed by the cytochrome P450 monooxygenases ptmK, ptmU, ptmL, ptmN and ptmJ yield the various penitrem compounds. PtmK, ptmU and ptmM are involved in the formation of the key bicyclic ring of penitrem C via the formation of the intermediates secopenitrem D and penitrem D. PtmL catalyzes the epoxidation of penitrem D and C to yield penitrem B and F, respectively. PtmJ catalyzes the last benzylic hydroxylation to convert penitrem B to prenitrem E and penitrem F to penitrem A. The protein is NmrA-like family domain-containing oxidoreductase ptmS of Penicillium ochrochloron.